Here is a 406-residue protein sequence, read N- to C-terminus: MSEKVVLAYSGGLDTSAAVKWLQEKYGMDVIAVTIDVGNEKDFTLIKEKALKVGAKKAYVRDVRKEFAEDYIWKAIKANSMYEGVYPLATALARPLIAKVMVDIALEEGATAIAHGCTGKGNDQVRFDVGINTLAPHLKIIAPARQWGMTREQTMEYAQKWGIPVPISVKNPFSIDENLWGRSIECGLLEDPWNEPIPEVFAWTRPVEETPDEPEYLEVEFEQGVPVAVNGEKLSPLALIQKVHDIASLHGVGRIDHVENRLVGIKSREIYEAPAAVVLIAAHQALEAMTLSKSQLRFKQMVEATYSDIIYNGLWFSALRQDLDAFIDSSQRFVSGTVRLKLSKGSFRVVGRKSPYSLYHKGMATYDKGDQFDPSSAVGFITLWGLQAKLQAQLQPILEEEKGNKS.

8–16 (AYSGGLDTS) is a binding site for ATP. Residue Tyr-86 participates in L-citrulline binding. Gly-116 lines the ATP pocket. Residues Thr-118, Asn-122, and Asp-123 each contribute to the L-aspartate site. Residue Asn-122 participates in L-citrulline binding. Positions 126, 174, 183, 259, and 271 each coordinate L-citrulline.

Belongs to the argininosuccinate synthase family. Type 1 subfamily. Homotetramer.

It is found in the cytoplasm. The enzyme catalyses L-citrulline + L-aspartate + ATP = 2-(N(omega)-L-arginino)succinate + AMP + diphosphate + H(+). It participates in amino-acid biosynthesis; L-arginine biosynthesis; L-arginine from L-ornithine and carbamoyl phosphate: step 2/3. In Dehalococcoides mccartyi (strain ATCC BAA-2100 / JCM 16839 / KCTC 5957 / BAV1), this protein is Argininosuccinate synthase.